The primary structure comprises 483 residues: MATRGGGPGPGFRHRALRGLLLLCLWLPGSRPGEPAAPSSGVDRLLQDFRRQLQRARPREELEPELLGGPREDCPGAGGTAVYRAVPDTIIRTQDSIAAGASFLRAPGSVRGWRQCVTACCSEPSCSVAVVQLPRGPSVPAPMPAPRCYLFNCTARGRSVCKFAPLRGYRTYTLSRAEDAAGIPPRPDEDKPPVSKAGKDVVLHLPTDGVVLDGRESSDDHAIVLYEWTLQQGDPSSVDMKVPQPGTLRLSRLKEGAYIFQLTVTDSVGQRSSDNVSVTVLPRPYSTGGCSSACSRYHFFCDSGCCIDIALACDGVRQCPDGSDEDFCQNLALDRKLVTHTVATSAQPGAMGLNEGEGDPKLEKSQRATTHNQPATVSHPETRIHSTQKAPESQINPVQPDSNSSGKNQEEGNYDLKSKSGQAGGEHPAPEAGAVLPLALGLAITVLLLLMVTCRLRLVKQKLKKARPITSEESDYLINGMYL.

Positions 1–32 are cleaved as a signal peptide; sequence MATRGGGPGPGFRHRALRGLLLLCLWLPGSRP. The Extracellular portion of the chain corresponds to 33 to 433; it reads GEPAAPSSGV…GGEHPAPEAG (401 aa). Residues 85–172 enclose the MANSC domain; sequence AVPDTIIRTQ…FAPLRGYRTY (88 aa). 2 N-linked (GlcNAc...) asparagine glycosylation sites follow: Asn-152 and Asn-275. The region spanning 193 to 287 is the PKD domain; sequence PVSKAGKDVV…VTVLPRPYST (95 aa). One can recognise an LDL-receptor class A domain in the interval 293-329; it reads ACSRYHFFCDSGCCIDIALACDGVRQCPDGSDEDFCQ. Disulfide bonds link Cys-294/Cys-306, Cys-301/Cys-319, and Cys-313/Cys-328. The tract at residues 346–428 is disordered; that stretch reads AQPGAMGLNE…KSGQAGGEHP (83 aa). Composition is skewed to polar residues over residues 367–376 and 385–407; these read RATTHNQPAT and HSTQ…SSGK. The N-linked (GlcNAc...) asparagine glycan is linked to Asn-403. The span at 408-418 shows a compositional bias: basic and acidic residues; sequence NQEEGNYDLKS. Residues 434–456 form a helical membrane-spanning segment; that stretch reads AVLPLALGLAITVLLLLMVTCRL. The Cytoplasmic portion of the chain corresponds to 457-483; the sequence is RLVKQKLKKARPITSEESDYLINGMYL. Ser-474 carries the post-translational modification Phosphoserine.

This sequence belongs to the LDLR family.

The protein resides in the membrane. This chain is Low-density lipoprotein receptor-related protein 11 (Lrp11), found in Mus musculus (Mouse).